The chain runs to 395 residues: NAD(P)H-quinone oxidoreductase subunit H (395 aa).

Belongs to the complex I 49 kDa subunit family. NDH-1 can be composed of about 15 different subunits; different subcomplexes with different compositions have been identified which probably have different functions.

It is found in the cellular thylakoid membrane. The catalysed reaction is a plastoquinone + NADH + (n+1) H(+)(in) = a plastoquinol + NAD(+) + n H(+)(out). It carries out the reaction a plastoquinone + NADPH + (n+1) H(+)(in) = a plastoquinol + NADP(+) + n H(+)(out). Functionally, NDH-1 shuttles electrons from an unknown electron donor, via FMN and iron-sulfur (Fe-S) centers, to quinones in the respiratory and/or the photosynthetic chain. The immediate electron acceptor for the enzyme in this species is believed to be plastoquinone. Couples the redox reaction to proton translocation, and thus conserves the redox energy in a proton gradient. Cyanobacterial NDH-1 also plays a role in inorganic carbon-concentration. The polypeptide is NAD(P)H-quinone oxidoreductase subunit H (Prochlorococcus marinus (strain MIT 9515)).